The following is a 306-amino-acid chain: tRNA dimethylallyltransferase (306 aa).

15 to 22 (GPTASGKS) is a binding site for ATP. 17–22 (TASGKS) is a binding site for substrate. The segment at 40–43 (DSMQ) is interaction with substrate tRNA.

The protein belongs to the IPP transferase family. In terms of assembly, monomer. It depends on Mg(2+) as a cofactor.

The enzyme catalyses adenosine(37) in tRNA + dimethylallyl diphosphate = N(6)-dimethylallyladenosine(37) in tRNA + diphosphate. Functionally, catalyzes the transfer of a dimethylallyl group onto the adenine at position 37 in tRNAs that read codons beginning with uridine, leading to the formation of N6-(dimethylallyl)adenosine (i(6)A). The sequence is that of tRNA dimethylallyltransferase from Methylobacterium sp. (strain 4-46).